The primary structure comprises 340 residues: Extracellular matrix protein-binding protein emp (340 aa).

An N-terminal signal peptide occupies residues 1–26 (MKKKLLVLTMSTLFATQLINSNHAKA).

The protein resides in the cell surface. In terms of biological role, adhesin that binds to the host cell extracellular matrix proteins fibronectin, fibrinogen, collagen, and vitronectin. This is Extracellular matrix protein-binding protein emp (emp) from Staphylococcus aureus (strain Mu50 / ATCC 700699).